The chain runs to 365 residues: D-alanine--D-alanine ligase (365 aa).

The ATP-grasp domain maps to 140-346 (KKILRRHGLQ…YSQLLTDLIY (207 aa)). 173–228 (EKQLSYPIFVKPANLGSSVGISKVKNREELIQGIDLAVKYDMKCLAEEFIPGKEIE) provides a ligand contact to ATP. Mg(2+)-binding residues include aspartate 299, glutamate 313, and asparagine 315.

It belongs to the D-alanine--D-alanine ligase family. Requires Mg(2+) as cofactor. Mn(2+) is required as a cofactor.

It localises to the cytoplasm. It catalyses the reaction 2 D-alanine + ATP = D-alanyl-D-alanine + ADP + phosphate + H(+). Its pathway is cell wall biogenesis; peptidoglycan biosynthesis. In terms of biological role, cell wall formation. This is D-alanine--D-alanine ligase from Natranaerobius thermophilus (strain ATCC BAA-1301 / DSM 18059 / JW/NM-WN-LF).